A 691-amino-acid polypeptide reads, in one-letter code: ATP-dependent zinc metalloprotease FtsH 2 (691 aa).

The interval 1–48 is disordered; the sequence is MTDEPQSDEQQTTEQERPLGTKRATRADGLRRPGVRSGLAERRSPAAD. Topologically, residues 1-64 are cytoplasmic; the sequence is MTDEPQSDEQ…AAVRRFLLRD (64 aa). Over residues 14 to 31 the composition is skewed to basic and acidic residues; the sequence is EQERPLGTKRATRADGLR. Residues 65–85 traverse the membrane as a helical segment; that stretch reads VFALGLMIAALVIVILFFTLL. Over 86–168 the chain is Extracellular; sequence GATKPTSSGT…AVKQQPGKAQ (83 aa). The helical transmembrane segment at 169–189 threads the bilayer; that stretch reads VTIVVQFLLPILLLVCLFALF. Over 190–691 the chain is Cytoplasmic; that stretch reads MRIGQDGGAG…ERGSARDRDA (502 aa). 265–272 lines the ATP pocket; that stretch reads GPPGTGKT. His-486 is a Zn(2+) binding site. The active site involves Glu-487. His-490 and Asp-563 together coordinate Zn(2+).

The protein in the central section; belongs to the AAA ATPase family. In the C-terminal section; belongs to the peptidase M41 family. As to quaternary structure, homohexamer. It depends on Zn(2+) as a cofactor.

It is found in the cell membrane. Functionally, acts as a processive, ATP-dependent zinc metallopeptidase for both cytoplasmic and membrane proteins. Plays a role in the quality control of integral membrane proteins. In Conexibacter woesei (strain DSM 14684 / CCUG 47730 / CIP 108061 / JCM 11494 / NBRC 100937 / ID131577), this protein is ATP-dependent zinc metalloprotease FtsH 2.